An 842-amino-acid chain; its full sequence is Unconventional myosin-Ia (842 aa).

One can recognise a Myosin motor domain in the interval 1–686; sequence GVEDLILLEP…TLFYLEEQRR (686 aa). ATP is bound at residue 93–100; that stretch reads GESGAGKT. Positions 563–585 are actin-binding; the sequence is VAILMKNLYSKNPNYIRCIKPND. IQ domains lie at 689 to 712, 713 to 733, and 735 to 764; these read LQQLATLIQKVYRGWRCRTHYQQM, RKSQILLSAWFRGNKQKKHYG, and IRSSVLLIQAFVRGWKARKNYRKYFRSGAR.

This sequence belongs to the TRAFAC class myosin-kinesin ATPase superfamily. Myosin family. Post-translationally, phosphorylated by ALPK1.

Functionally, involved in directing the movement of organelles along actin filaments. This Rattus norvegicus (Rat) protein is Unconventional myosin-Ia (Myo1a).